The following is a 187-amino-acid chain: Interferon alpha-1/2 (187 aa).

Residues 1 to 23 form the signal peptide; sequence MALPCSFSVALVLLSCHSLCCLA. 2 disulfides stabilise this stretch: C24-C122 and C52-C160. N-linked (GlcNAc...) asparagine glycosylation is present at N101.

The protein belongs to the alpha/beta interferon family.

The protein resides in the secreted. In terms of biological role, produced by macrophages, IFN-alpha have antiviral activities. Interferon stimulates the production of two enzymes: a protein kinase and an oligoadenylate synthetase. This chain is Interferon alpha-1/2, found in Canis lupus familiaris (Dog).